We begin with the raw amino-acid sequence, 299 residues long: Centriolar and ciliogenesis-associated protein HYLS1 (299 aa).

Serine 179 is modified (phosphoserine).

This sequence belongs to the HYLS1 family.

It is found in the cytoplasm. Its subcellular location is the cell projection. The protein resides in the cilium. The protein localises to the cytoskeleton. It localises to the microtubule organizing center. It is found in the centrosome. Its subcellular location is the centriole. Plays a role in ciliogenesis. In Homo sapiens (Human), this protein is Centriolar and ciliogenesis-associated protein HYLS1.